A 149-amino-acid chain; its full sequence is Transcriptional repressor NrdR (149 aa).

The segment at 3–34 (CPFCSATDTKVIDSRLVADGHQVRRRRECAEC) is a zinc-finger region. The ATP-cone domain occupies 49–139 (PRVVKQDGSR…VYRAFEDVSE (91 aa)).

This sequence belongs to the NrdR family. It depends on Zn(2+) as a cofactor.

In terms of biological role, negatively regulates transcription of bacterial ribonucleotide reductase nrd genes and operons by binding to NrdR-boxes. This chain is Transcriptional repressor NrdR, found in Shewanella woodyi (strain ATCC 51908 / MS32).